Consider the following 511-residue polypeptide: Maturase K (511 aa).

The protein belongs to the intron maturase 2 family. MatK subfamily.

The protein resides in the plastid. The protein localises to the chloroplast. Functionally, usually encoded in the trnK tRNA gene intron. Probably assists in splicing its own and other chloroplast group II introns. This Phleum pratense (Common timothy) protein is Maturase K.